The primary structure comprises 346 residues: Small ribosomal subunit biogenesis GTPase RsgA (346 aa).

Residues 98–261 form the CP-type G domain; the sequence is VQGGRGPQLA…VIDTPGMRTL (164 aa). GTP is bound by residues 148–151 and 200–208; these read TKAD and GSSGVGKST. 4 residues coordinate Zn(2+): C284, C289, H291, and C297. The tract at residues 317 to 346 is disordered; the sequence is RKLSDENQHNTPVQSGPRGAKSPAGRGKRR.

Belongs to the TRAFAC class YlqF/YawG GTPase family. RsgA subfamily. As to quaternary structure, monomer. Associates with 30S ribosomal subunit, binds 16S rRNA. The cofactor is Zn(2+).

The protein resides in the cytoplasm. In terms of biological role, one of several proteins that assist in the late maturation steps of the functional core of the 30S ribosomal subunit. Helps release RbfA from mature subunits. May play a role in the assembly of ribosomal proteins into the subunit. Circularly permuted GTPase that catalyzes slow GTP hydrolysis, GTPase activity is stimulated by the 30S ribosomal subunit. This Mesorhizobium japonicum (strain LMG 29417 / CECT 9101 / MAFF 303099) (Mesorhizobium loti (strain MAFF 303099)) protein is Small ribosomal subunit biogenesis GTPase RsgA.